We begin with the raw amino-acid sequence, 234 residues long: DNA repair and recombination protein RadB (234 aa).

The protein belongs to the eukaryotic RecA-like protein family. RadB subfamily.

Functionally, involved in DNA repair and in homologous recombination. May regulate the cleavage reactions of the branch-structured DNA. Has a very weak ATPase activity that is not stimulated by DNA. Binds DNA but does not promote DNA strands exchange. This Methanobrevibacter smithii (strain ATCC 35061 / DSM 861 / OCM 144 / PS) protein is DNA repair and recombination protein RadB.